The primary structure comprises 269 residues: MGTIADIAATEQNAERFWIVVHRDGAPSLRLTVDQDVLLQFRLKKGMEISDDLLQHIVYADEVKKAYQQALYFLAHRMRSEHEVAAHLRKKGAPDSVIDEVLKKLRAERYVDDEAFAAAYVRTQKKTAAKGPLLVRAELERLGVPDRLIEQSLAEYTLDEQMAIARSLYEKAKKQRRDESARAFLERVRQQLMRKGFPHEVIAAVLADGGTHTEQEEREALSVQAEKAHRRYAHHPRPLYEQKMRQALYRKGFALDLINEWLRMHGNDE.

It belongs to the RecX family.

It is found in the cytoplasm. Functionally, modulates RecA activity. In Geobacillus kaustophilus (strain HTA426), this protein is Regulatory protein RecX.